The sequence spans 362 residues: Ferredoxin--NADP reductase, leaf-type isozyme, chloroplastic (362 aa).

Residues 1-20 (MATAVSAAVSLPSSKSTSFS) are disordered. The transit peptide at 1–62 (MATAVSAAVS…RAQVTTEAPA (62 aa)) directs the protein to the chloroplast. Residues 10 to 20 (SLPSSKSTSFS) are compositionally biased toward low complexity. The FAD-binding FR-type domain maps to 83-205 (KEPYVGRCLL…TGPVGKEMLM (123 aa)). FAD-binding positions include 141-144 (RLYS), 162-164 (CVK), Tyr-168, 179-181 (VCS), and Thr-220. NADP(+)-binding residues include Ser-144 and Lys-164. Residues Thr-220, 252-253 (VP), 282-283 (SR), Lys-292, 321-322 (GL), and Glu-360 each bind NADP(+).

This sequence belongs to the ferredoxin--NADP reductase type 1 family. FAD serves as cofactor.

It is found in the plastid. It localises to the chloroplast stroma. Its subcellular location is the chloroplast thylakoid membrane. The enzyme catalyses 2 reduced [2Fe-2S]-[ferredoxin] + NADP(+) + H(+) = 2 oxidized [2Fe-2S]-[ferredoxin] + NADPH. Its pathway is energy metabolism; photosynthesis. Functionally, may play a key role in regulating the relative amounts of cyclic and non-cyclic electron flow to meet the demands of the plant for ATP and reducing power. This Nicotiana tabacum (Common tobacco) protein is Ferredoxin--NADP reductase, leaf-type isozyme, chloroplastic (PETH).